A 182-amino-acid chain; its full sequence is uncharacterized protein (182 aa).

Disordered stretches follow at residues 1-73 (MMSG…YRSL) and 105-182 (SMST…HLNR). Composition is skewed to low complexity over residues 43–68 (RPSP…ETSS) and 105–121 (SMST…SPVT). The span at 122-131 (APAPPPPPTS) shows a compositional bias: pro residues.

This is an uncharacterized protein from Caenorhabditis elegans.